We begin with the raw amino-acid sequence, 241 residues long: L-aspartate dehydrogenase (241 aa).

Residues Ala-109 and Asn-164 each coordinate NAD(+). Residue His-193 is part of the active site.

Belongs to the L-aspartate dehydrogenase family.

It catalyses the reaction L-aspartate + NADP(+) + H2O = oxaloacetate + NH4(+) + NADPH + H(+). The enzyme catalyses L-aspartate + NAD(+) + H2O = oxaloacetate + NH4(+) + NADH + H(+). It functions in the pathway cofactor biosynthesis; NAD(+) biosynthesis; iminoaspartate from L-aspartate (dehydrogenase route): step 1/1. In terms of biological role, specifically catalyzes the NAD or NADP-dependent dehydrogenation of L-aspartate to iminoaspartate. The sequence is that of L-aspartate dehydrogenase from Thermotoga sp. (strain RQ2).